The chain runs to 143 residues: Large ribosomal subunit protein uL11 (143 aa).

This sequence belongs to the universal ribosomal protein uL11 family. In terms of assembly, part of the ribosomal stalk of the 50S ribosomal subunit. Interacts with L10 and the large rRNA to form the base of the stalk. L10 forms an elongated spine to which L12 dimers bind in a sequential fashion forming a multimeric L10(L12)X complex. One or more lysine residues are methylated.

Functionally, forms part of the ribosomal stalk which helps the ribosome interact with GTP-bound translation factors. This Thioalkalivibrio sulfidiphilus (strain HL-EbGR7) protein is Large ribosomal subunit protein uL11.